We begin with the raw amino-acid sequence, 278 residues long: Alcohol dehydrogenase-related 31 kDa protein (278 aa).

11 to 34 (YVADCGGIALETSKVLMTKNIAKL) contributes to the NAD(+) binding site. Substrate is bound at residue S139. Y152 functions as the Proton acceptor in the catalytic mechanism.

Belongs to the short-chain dehydrogenases/reductases (SDR) family.

The protein is Alcohol dehydrogenase-related 31 kDa protein (Adhr) of Drosophila persimilis (Fruit fly).